Reading from the N-terminus, the 251-residue chain is Octanoyltransferase (251 aa).

In terms of domain architecture, BPL/LPL catalytic spans 56 to 241 (ADTGDEIWVV…NLDGASAAAD (186 aa)). Residues 96 to 103 (RGGQITYH), 168 to 170 (ALG), and 181 to 183 (GLS) contribute to the substrate site. Residue Cys-199 is the Acyl-thioester intermediate of the active site.

The protein belongs to the LipB family.

Its subcellular location is the cytoplasm. It catalyses the reaction octanoyl-[ACP] + L-lysyl-[protein] = N(6)-octanoyl-L-lysyl-[protein] + holo-[ACP] + H(+). It participates in protein modification; protein lipoylation via endogenous pathway; protein N(6)-(lipoyl)lysine from octanoyl-[acyl-carrier-protein]: step 1/2. In terms of biological role, catalyzes the transfer of endogenously produced octanoic acid from octanoyl-acyl-carrier-protein onto the lipoyl domains of lipoate-dependent enzymes. Lipoyl-ACP can also act as a substrate although octanoyl-ACP is likely to be the physiological substrate. The protein is Octanoyltransferase of Burkholderia orbicola (strain AU 1054).